Consider the following 475-residue polypeptide: Trifunctional enzyme subunit beta, mitochondrial (475 aa).

A mitochondrion-targeting transit peptide spans 1–34 (MTTILTYPFKNLPTASKWALRFSIRPLSCSSQLR). Residue K73 is modified to N6-acetyllysine; alternate. An N6-succinyllysine; alternate modification is found at K73. C139 acts as the Acyl-thioester intermediate in catalysis. Residues 174 to 221 (IRHSRKMRKLMLDLNKAKSMGQRLSLISKFRFNFLAPELPAVSEFSTS) lie within the membrane without spanning it. K189 carries the N6-acetyllysine; alternate modification. K189 is subject to N6-succinyllysine; alternate. N6-succinyllysine is present on residues K191, K273, and K292. K294 is subject to N6-acetyllysine; alternate. K294 is modified (N6-succinyllysine; alternate). K299 carries the N6-acetyllysine modification. Position 333 is an N6-acetyllysine; alternate (K333). K333 is modified (N6-succinyllysine; alternate). 2 positions are modified to N6-acetyllysine: K349 and K362. Residue C459 is the Proton donor/acceptor of the active site.

This sequence belongs to the thiolase-like superfamily. Thiolase family. In terms of assembly, heterotetramer of 2 alpha/HADHA and 2 beta/HADHB subunits; forms the mitochondrial trifunctional enzyme. Also purified as higher order heterooligomers including a 4 alpha/HADHA and 4 beta/HADHB heterooligomer which physiological significance remains unclear. The mitochondrial trifunctional enzyme interacts with MTLN. Interacts with RSAD2/viperin.

The protein resides in the mitochondrion. Its subcellular location is the mitochondrion inner membrane. It localises to the mitochondrion outer membrane. The protein localises to the endoplasmic reticulum. It carries out the reaction an acyl-CoA + acetyl-CoA = a 3-oxoacyl-CoA + CoA. The catalysed reaction is butanoyl-CoA + acetyl-CoA = 3-oxohexanoyl-CoA + CoA. It catalyses the reaction hexanoyl-CoA + acetyl-CoA = 3-oxooctanoyl-CoA + CoA. The enzyme catalyses octanoyl-CoA + acetyl-CoA = 3-oxodecanoyl-CoA + CoA. It carries out the reaction decanoyl-CoA + acetyl-CoA = 3-oxododecanoyl-CoA + CoA. The catalysed reaction is dodecanoyl-CoA + acetyl-CoA = 3-oxotetradecanoyl-CoA + CoA. It catalyses the reaction tetradecanoyl-CoA + acetyl-CoA = 3-oxohexadecanoyl-CoA + CoA. It functions in the pathway lipid metabolism; fatty acid beta-oxidation. Its function is as follows. Mitochondrial trifunctional enzyme catalyzes the last three of the four reactions of the mitochondrial beta-oxidation pathway. The mitochondrial beta-oxidation pathway is the major energy-producing process in tissues and is performed through four consecutive reactions breaking down fatty acids into acetyl-CoA. Among the enzymes involved in this pathway, the trifunctional enzyme exhibits specificity for long-chain fatty acids. Mitochondrial trifunctional enzyme is a heterotetrameric complex composed of two proteins, the trifunctional enzyme subunit alpha/HADHA carries the 2,3-enoyl-CoA hydratase and the 3-hydroxyacyl-CoA dehydrogenase activities, while the trifunctional enzyme subunit beta/HADHB described here bears the 3-ketoacyl-CoA thiolase activity. The protein is Trifunctional enzyme subunit beta, mitochondrial (HADHB) of Pan troglodytes (Chimpanzee).